The following is a 188-amino-acid chain: Elongation factor P (188 aa).

It belongs to the elongation factor P family.

The protein resides in the cytoplasm. The protein operates within protein biosynthesis; polypeptide chain elongation. Involved in peptide bond synthesis. Stimulates efficient translation and peptide-bond synthesis on native or reconstituted 70S ribosomes in vitro. Probably functions indirectly by altering the affinity of the ribosome for aminoacyl-tRNA, thus increasing their reactivity as acceptors for peptidyl transferase. This chain is Elongation factor P (efp), found in Ureaplasma parvum serovar 3 (strain ATCC 700970).